The chain runs to 122 residues: Replication termination protein (122 aa).

Homodimer.

In terms of biological role, plays a role in DNA replication and termination (fork arrest mechanism). Two dimers of rtp bind to the two inverted repeat regions (IRI and IRII) present in the termination site. The binding of each dimer is centered on an 8 bp direct repeat. This Bacillus spizizenii (strain ATCC 23059 / NRRL B-14472 / W23) (Bacillus subtilis subsp. spizizenii) protein is Replication termination protein (rtp).